The following is a 397-amino-acid chain: Probable tRNA sulfurtransferase (397 aa).

Residues 60–165 form the THUMP domain; it reads HPVIEKLQEV…KEGTYITAYD (106 aa). ATP-binding positions include 183–184, 208–209, Arg265, Gly287, and Gln296; these read ML and HF.

It belongs to the ThiI family.

Its subcellular location is the cytoplasm. It catalyses the reaction [ThiI sulfur-carrier protein]-S-sulfanyl-L-cysteine + a uridine in tRNA + 2 reduced [2Fe-2S]-[ferredoxin] + ATP + H(+) = [ThiI sulfur-carrier protein]-L-cysteine + a 4-thiouridine in tRNA + 2 oxidized [2Fe-2S]-[ferredoxin] + AMP + diphosphate. The enzyme catalyses [ThiS sulfur-carrier protein]-C-terminal Gly-Gly-AMP + S-sulfanyl-L-cysteinyl-[cysteine desulfurase] + AH2 = [ThiS sulfur-carrier protein]-C-terminal-Gly-aminoethanethioate + L-cysteinyl-[cysteine desulfurase] + A + AMP + 2 H(+). The protein operates within cofactor biosynthesis; thiamine diphosphate biosynthesis. Catalyzes the ATP-dependent transfer of a sulfur to tRNA to produce 4-thiouridine in position 8 of tRNAs, which functions as a near-UV photosensor. Also catalyzes the transfer of sulfur to the sulfur carrier protein ThiS, forming ThiS-thiocarboxylate. This is a step in the synthesis of thiazole, in the thiamine biosynthesis pathway. The sulfur is donated as persulfide by IscS. The sequence is that of Probable tRNA sulfurtransferase from Anoxybacillus flavithermus (strain DSM 21510 / WK1).